We begin with the raw amino-acid sequence, 281 residues long: Digeranylgeranylglyceryl phosphate synthase (281 aa).

8 helical membrane passes run 7–27 (ILRPVNAVMAVITVMLMALIT), 32–52 (FSVLLASVVVFTATGAGNVIN), 72–91 (GRISRGVAGVYSIILFALAS), 95–117 (FYLGLLPGLVVVSSSLLMVYYAW), 128–148 (ITISFLTGLSFVFGGIVLGEV), 193–213 (ISGVLAASFMLIASLTSPSLY), 214–234 (LLGIFSALYIPVLLLAVAVFL), and 258–278 (VGMALTFIAFAAGSGTITALT).

It belongs to the UbiA prenyltransferase family. DGGGP synthase subfamily. Requires Mg(2+) as cofactor.

It localises to the cell membrane. It carries out the reaction sn-3-O-(geranylgeranyl)glycerol 1-phosphate + (2E,6E,10E)-geranylgeranyl diphosphate = 2,3-bis-O-(geranylgeranyl)-sn-glycerol 1-phosphate + diphosphate. It participates in membrane lipid metabolism; glycerophospholipid metabolism. Prenyltransferase that catalyzes the transfer of the geranylgeranyl moiety of geranylgeranyl diphosphate (GGPP) to the C2 hydroxyl of (S)-3-O-geranylgeranylglyceryl phosphate (GGGP). This reaction is the second ether-bond-formation step in the biosynthesis of archaeal membrane lipids. The sequence is that of Digeranylgeranylglyceryl phosphate synthase from Methanothermobacter thermautotrophicus (strain ATCC 29096 / DSM 1053 / JCM 10044 / NBRC 100330 / Delta H) (Methanobacterium thermoautotrophicum).